A 213-amino-acid polypeptide reads, in one-letter code: ATP synthase peripheral stalk subunit OSCP, mitochondrial (213 aa).

The transit peptide at 1–23 (MATPAVSGLSRQVRCFSTSVVRP) directs the protein to the mitochondrion. Residues 5 to 23 (AVSGLSRQVRCFSTSVVRP) carry the SIFI-degron motif. N6-acetyllysine occurs at positions 54, 60, 70, and 73. Lys90 carries the post-translational modification N6-succinyllysine. N6-acetyllysine; alternate occurs at positions 158 and 162. Lys158 and Lys162 each carry N6-succinyllysine; alternate. Lys172, Lys176, and Lys192 each carry N6-acetyllysine. N6-succinyllysine is present on Lys199.

It belongs to the ATPase delta chain family. In terms of assembly, component of the ATP synthase complex composed at least of ATP5F1A/subunit alpha, ATP5F1B/subunit beta, ATP5MC1/subunit c (homooctomer), MT-ATP6/subunit a, MT-ATP8/subunit 8, ATP5ME/subunit e, ATP5MF/subunit f, ATP5MG/subunit g, ATP5MK/subunit k, ATP5MJ/subunit j, ATP5F1C/subunit gamma, ATP5F1D/subunit delta, ATP5F1E/subunit epsilon, ATP5PF/subunit F6, ATP5PB/subunit b, ATP5PD/subunit d, ATP5PO/subunit OSCP. ATP synthase complex consists of a soluble F(1) head domain (subunits alpha(3) and beta(3)) - the catalytic core - and a membrane F(0) domain - the membrane proton channel (subunits c, a, 8, e, f, g, k and j). These two domains are linked by a central stalk (subunits gamma, delta, and epsilon) rotating inside the F1 region and a stationary peripheral stalk (subunits F6, b, d, and OSCP). In terms of processing, acetylation at Lys-162 decreases ATP production. Deacetylated by SIRT3. Post-translationally, in response to mitochondrial stress, the precursor protein is ubiquitinated by the SIFI complex in the cytoplasm before mitochondrial import, leading to its degradation. Within the SIFI complex, UBR4 initiates ubiquitin chain that are further elongated or branched by KCMF1.

It localises to the mitochondrion. It is found in the mitochondrion inner membrane. Functionally, subunit OSCP, of the mitochondrial membrane ATP synthase complex (F(1)F(0) ATP synthase or Complex V) that produces ATP from ADP in the presence of a proton gradient across the membrane which is generated by electron transport complexes of the respiratory chain. ATP synthase complex consist of a soluble F(1) head domain - the catalytic core - and a membrane F(1) domain - the membrane proton channel. These two domains are linked by a central stalk rotating inside the F(1) region and a stationary peripheral stalk. During catalysis, ATP synthesis in the catalytic domain of F(1) is coupled via a rotary mechanism of the central stalk subunits to proton translocation. In vivo, can only synthesize ATP although its ATP hydrolase activity can be activated artificially in vitro. Part of the complex F(0) domain. Part of the complex F(0) domain and the peripheric stalk, which acts as a stator to hold the catalytic alpha(3)beta(3) subcomplex and subunit a/ATP6 static relative to the rotary elements. This chain is ATP synthase peripheral stalk subunit OSCP, mitochondrial, found in Pongo abelii (Sumatran orangutan).